Consider the following 313-residue polypeptide: Dihydroorotate dehydrogenase B (NAD(+)), catalytic subunit (313 aa).

FMN contacts are provided by residues S21 and K45–A46. Substrate-binding positions include K45 and N69–L73. FMN contacts are provided by N99 and N127. N127 contributes to the substrate binding site. Residue C130 is the Nucleophile of the active site. FMN is bound by residues K165 and I191. N192–T193 lines the substrate pocket. FMN is bound by residues G217, G243–G244, and G265–T266.

The protein belongs to the dihydroorotate dehydrogenase family. Type 1 subfamily. In terms of assembly, heterotetramer of 2 PyrK and 2 PyrD type B subunits. Requires FMN as cofactor.

The protein resides in the cytoplasm. It catalyses the reaction (S)-dihydroorotate + NAD(+) = orotate + NADH + H(+). Its pathway is pyrimidine metabolism; UMP biosynthesis via de novo pathway; orotate from (S)-dihydroorotate (NAD(+) route): step 1/1. Catalyzes the conversion of dihydroorotate to orotate with NAD(+) as electron acceptor. This chain is Dihydroorotate dehydrogenase B (NAD(+)), catalytic subunit (pyrD), found in Geobacillus kaustophilus (strain HTA426).